A 157-amino-acid polypeptide reads, in one-letter code: Putative dehydration-responsive element-binding protein 2H (157 aa).

Positions 5-21 (RKSRGTRDVAEILRKWR) match the Nuclear localization signal motif. A disordered region spans residues 29–57 (ADSCIDGGGSKPIRKAPPKRSRKGCMKGK). Residues 40 to 54 (PIRKAPPKRSRKGCM) show a composition bias toward basic residues. The AP2/ERF DNA-binding region spans 66–123 (DYTGVRQRTWGKWVAEIREPGRGAKLWLGTFSSSYEAALAYDEASKAIYGQSARLNLP).

The protein belongs to the AP2/ERF transcription factor family. ERF subfamily.

The protein localises to the nucleus. Functionally, putative transcriptional activator that binds specifically to the DNA sequence 5'-[AG]CCGAC-3'. The chain is Putative dehydration-responsive element-binding protein 2H (DREB2H) from Arabidopsis thaliana (Mouse-ear cress).